A 119-amino-acid polypeptide reads, in one-letter code: Large ribosomal subunit protein bL19 (119 aa).

This sequence belongs to the bacterial ribosomal protein bL19 family.

Functionally, this protein is located at the 30S-50S ribosomal subunit interface and may play a role in the structure and function of the aminoacyl-tRNA binding site. The chain is Large ribosomal subunit protein bL19 from Psychromonas ingrahamii (strain DSM 17664 / CCUG 51855 / 37).